A 714-amino-acid polypeptide reads, in one-letter code: Polyribonucleotide nucleotidyltransferase (714 aa).

Positions 489 and 495 each coordinate Mg(2+). The KH domain maps to 556-615 (PKIDTIKIDVDKIKVVIGKGGETIDKIIAETGVKIDIDEEGNVSIYSSDQDAINRAKEII). One can recognise an S1 motif domain in the interval 625–693 (GEVYHAKVVR…DKGRIDASMK (69 aa)). Residues 691–714 (SMKALVPRPPKPEKSEAKKEGKHD) form a disordered region. A compositionally biased stretch (basic and acidic residues) spans 700-714 (PKPEKSEAKKEGKHD).

This sequence belongs to the polyribonucleotide nucleotidyltransferase family. Mg(2+) is required as a cofactor.

The protein localises to the cytoplasm. The catalysed reaction is RNA(n+1) + phosphate = RNA(n) + a ribonucleoside 5'-diphosphate. Its function is as follows. Involved in mRNA degradation. Catalyzes the phosphorolysis of single-stranded polyribonucleotides processively in the 3'- to 5'-direction. This Streptococcus equi subsp. equi (strain 4047) protein is Polyribonucleotide nucleotidyltransferase.